Reading from the N-terminus, the 585-residue chain is UvrABC system protein C (585 aa).

Residues 15–90 (AEPGVYQFLE…IKRHQPRYNV (76 aa)) form the GIY-YIG domain. The UVR domain occupies 198 to 233 (GILADPLRQEMQAAATAEEFERAANIRDRLAVIESF).

Belongs to the UvrC family. In terms of assembly, interacts with UvrB in an incision complex.

The protein resides in the cytoplasm. The UvrABC repair system catalyzes the recognition and processing of DNA lesions. UvrC both incises the 5' and 3' sides of the lesion. The N-terminal half is responsible for the 3' incision and the C-terminal half is responsible for the 5' incision. The chain is UvrABC system protein C from Haloquadratum walsbyi (strain DSM 16790 / HBSQ001).